Reading from the N-terminus, the 594-residue chain is KIF-binding protein (594 aa).

This sequence belongs to the KIF-binding protein family.

It localises to the cytoplasm. Its subcellular location is the cytoskeleton. Activator of KIF1B plus-end-directed microtubule motor activity. Required for organization of axonal microtubules, and axonal outgrowth and maintenance during peripheral and central nervous system development. The protein is KIF-binding protein (Kifbp) of Gallus gallus (Chicken).